The primary structure comprises 130 residues: Mediator of RNA polymerase II transcription subunit 10 (130 aa).

Belongs to the Mediator complex subunit 10 family. As to quaternary structure, component of the Mediator complex.

The protein localises to the nucleus. Functionally, component of the Mediator complex, a coactivator involved in the regulated transcription of nearly all RNA polymerase II-dependent genes. Mediator functions as a bridge to convey information from gene-specific regulatory proteins to the basal RNA polymerase II transcription machinery. Mediator is recruited to promoters by direct interactions with regulatory proteins and serves as a scaffold for the assembly of a functional preinitiation complex with RNA polymerase II and the general transcription factors. This is Mediator of RNA polymerase II transcription subunit 10 (MED10) from Anopheles gambiae (African malaria mosquito).